The following is a 505-amino-acid chain: Catalase (505 aa).

Catalysis depends on residues His-56 and Asn-129. Position 339 (Tyr-339) interacts with heme.

This sequence belongs to the catalase family. Heme serves as cofactor.

The protein localises to the cytoplasm. The catalysed reaction is 2 H2O2 = O2 + 2 H2O. Its function is as follows. Decomposes hydrogen peroxide into water and oxygen; serves to protect cells from the toxic effects of hydrogen peroxide. The polypeptide is Catalase (katA) (Helicobacter pylori (strain J99 / ATCC 700824) (Campylobacter pylori J99)).